We begin with the raw amino-acid sequence, 178 residues long: Large ribosomal subunit protein uL6 (178 aa).

It belongs to the universal ribosomal protein uL6 family. In terms of assembly, part of the 50S ribosomal subunit.

This protein binds to the 23S rRNA, and is important in its secondary structure. It is located near the subunit interface in the base of the L7/L12 stalk, and near the tRNA binding site of the peptidyltransferase center. The chain is Large ribosomal subunit protein uL6 from Limosilactobacillus reuteri (strain DSM 20016) (Lactobacillus reuteri).